A 344-amino-acid polypeptide reads, in one-letter code: Heat-inducible transcription repressor HrcA (344 aa).

This sequence belongs to the HrcA family.

Functionally, negative regulator of class I heat shock genes (grpE-dnaK-dnaJ and groELS operons). Prevents heat-shock induction of these operons. The protein is Heat-inducible transcription repressor HrcA of Streptococcus equi subsp. zooepidemicus (strain MGCS10565).